The sequence spans 139 residues: Coat protein TP2 (139 aa).

Its subcellular location is the virion. The protein is Coat protein TP2 of Thermoproteus tenax virus 1 (strain KRA1) (TTV1).